The chain runs to 483 residues: Cyclic AMP-dependent transcription factor ATF-7 (483 aa).

Residues 1–285 (MGDDRPFVCN…GMVVGTASTM (285 aa)) are transactivation domain. A C2H2-type zinc finger spans residues 7-31 (FVCNAPGCGQRFTNEDHLAVHKHKH). Position 51 is a phosphothreonine; by MAPK11 (T51). 2 positions are modified to phosphothreonine: T53 and T101. K107 is covalently cross-linked (Glycyl lysine isopeptide (Lys-Gly) (interchain with G-Cter in SUMO1)). Disordered regions lie at residues 110–148 (EPVE…TPTP) and 299–345 (HPDA…NRAA). Composition is skewed to low complexity over residues 114–126 (VDSS…ASSP) and 307–320 (QPQV…PSTG). The segment at 325-483 (RTVDEDPDER…MTPQSQSAGR (159 aa)) is essential for binding adenovirus 2 E1A. Over residues 326–343 (TVDEDPDERRQRFLERNR) the composition is skewed to basic and acidic residues. The bZIP domain occupies 332-395 (DERRQRFLER…AQLKQLLLAH (64 aa)). A basic motif region spans residues 334–354 (RRQRFLERNRAAASRCRQKRK). Residues 360 to 388 (LEKKAEELTSQNIQLSNEVTLLRNEVAQL) are leucine-zipper. A disordered region spans residues 407–439 (TQGYLESPKESSEPTGSPAPVIQHSSATAPSNG). Residues S413 and S423 each carry the phosphoserine modification. The segment covering 429–439 (QHSSATAPSNG) has biased composition (polar residues).

It belongs to the bZIP family. As to quaternary structure, homodimer; binds DNA as homodimer. Heterodimer; heterodimerizes with other members of ATF family and with JUN family members. Interacts with JNK2; the interaction does not phosphorylate ATF7 but acts as a docking site for other ATF-associated partners such as JUN family members. Interacts (via its transactivation domain) with TAF12 (isoforms TAFII15 and TAFII20); the interaction potentiates the transactivation activity (isoform TAFII20 only) and is inhibited by ATF7 sumoylation. Interacts with TAF4; the interaction inhibits the TAF12-dependent transactivation. Interacts with MAPK9; the interaction does not phosphorylate ATF7 but acts as a docking site for ATF7-associated partners such as JUN. Interacts with Ku complex components XRCC6 and XRCC7. Interacts with TERT. In terms of assembly, (Microbial infection) Interacts with adenovirus 2 E1A; the interaction enhances the ATF7-mediated viral transactivation activity which requires the zinc-binding domains of both E1A and ATF7. In terms of processing, on EGF stimulation, phosphorylated first on Thr-53 allowing subsequent phosphorylation on Thr-51. This latter phosphorylation prevents sumoylation, increases binding to TAF12 and enhances transcriptional activity. Sumoylation delays nuclear localization and inhibits transactivation activity through preventing binding to TAF12. RANBP2 appears to be the specific E3 ligase. Post-translationally, on EGF stimulation, phosphorylated first on Thr-53 allowing subsequent phosphorylation on Thr-51. This latter phosphorylation prevents sumoylation, increases binding to TAF12 and enhances transcriptional activity. Social isolation stress as well as TNF-alpha also induce the phosphorylation of ATF7. Phosphorylated in proliferating colonic and small intestinal epithelial cells. Expressed in various tissues including heart, brain, placenta, lung and skeletal muscle. Highest levels in skeletal muscle. Lowest in lung and placenta. As to expression, strongly expressed in skeletal muscle. Also expressed at lower levels in heart and lung.

The protein localises to the nucleus. The protein resides in the nucleoplasm. It is found in the chromosome. It localises to the telomere. Its subcellular location is the cytoplasm. Its function is as follows. Stress-responsive chromatin regulator that plays a role in various biological processes including innate immunological memory, adipocyte differentiation or telomerase regulation. In absence of stress, contributes to the formation of heterochromatin and heterochromatin-like structure by recruiting histone H3K9 tri- and di-methyltransferases thus silencing the transcription of target genes such as STAT1 in adipocytes, or genes involved in innate immunity in macrophages and adipocytes. Stress induces ATF7 phosphorylation that disrupts interactions with histone methyltransferase and enhances the association with coactivators containing histone acetyltransferase and/or histone demethylase, leading to disruption of the heterochromatin-like structure and subsequently transcriptional activation. In response to TNF-alpha, which is induced by various stresses, phosphorylated ATF7 and telomerase are released from telomeres leading to telomere shortening. Also plays a role in maintaining epithelial regenerative capacity and protecting against cell death during intestinal epithelial damage and repair. In terms of biological role, acts as a dominant repressor of the E-selectin/NF-ELAM1/delta-A promoter. Functionally, acts as a negative regulator, inhibiting both ATF2 and ATF7 transcriptional activities. It may exert these effects by sequestrating in the cytoplasm the Thr-53 phosphorylating kinase, preventing activation. This is Cyclic AMP-dependent transcription factor ATF-7 (ATF7) from Homo sapiens (Human).